The chain runs to 344 residues: Alkyl hydroperoxide reductase Rv2159c (344 aa).

The segment at 49–50 (AG) is important for interaction with PknI. Cysteine 84 acts as the Cysteine sulfenic acid (-SOH) intermediate in catalysis.

Belongs to the AhpD family. In terms of assembly, interacts with the serine/threonine-protein kinase PknI. The PknI-Rv2159c interaction is mediated through phosphorylation independent physical interaction.

With respect to regulation, interaction with PknI increases the peroxidase activity by several folds. Functionally, involved in protection against oxidative stresses. May play a significant role in maintaining the cellular homeostasis during stress and virulence of M.tuberculosis. In vitro, catalyzes the decomposition of cumene hydroperoxide (CHP) to acetophenone. The chain is Alkyl hydroperoxide reductase Rv2159c from Mycobacterium tuberculosis (strain ATCC 25618 / H37Rv).